The chain runs to 483 residues: Glutamyl-tRNA(Gln) amidotransferase subunit A (483 aa).

Active-site charge relay system residues include Lys76 and Ser151. Ser175 acts as the Acyl-ester intermediate in catalysis.

It belongs to the amidase family. GatA subfamily. Heterotrimer of A, B and C subunits.

It carries out the reaction L-glutamyl-tRNA(Gln) + L-glutamine + ATP + H2O = L-glutaminyl-tRNA(Gln) + L-glutamate + ADP + phosphate + H(+). Allows the formation of correctly charged Gln-tRNA(Gln) through the transamidation of misacylated Glu-tRNA(Gln) in organisms which lack glutaminyl-tRNA synthetase. The reaction takes place in the presence of glutamine and ATP through an activated gamma-phospho-Glu-tRNA(Gln). The protein is Glutamyl-tRNA(Gln) amidotransferase subunit A of Nitrosospira multiformis (strain ATCC 25196 / NCIMB 11849 / C 71).